Reading from the N-terminus, the 136-residue chain is Transcription antitermination protein NusB (136 aa).

This sequence belongs to the NusB family.

In terms of biological role, involved in transcription antitermination. Required for transcription of ribosomal RNA (rRNA) genes. Binds specifically to the boxA antiterminator sequence of the ribosomal RNA (rrn) operons. This chain is Transcription antitermination protein NusB, found in Pseudoalteromonas translucida (strain TAC 125).